We begin with the raw amino-acid sequence, 337 residues long: Phosphate acyltransferase (337 aa).

Belongs to the PlsX family. As to quaternary structure, homodimer. Probably interacts with PlsY.

The protein resides in the cytoplasm. The enzyme catalyses a fatty acyl-[ACP] + phosphate = an acyl phosphate + holo-[ACP]. The protein operates within lipid metabolism; phospholipid metabolism. Catalyzes the reversible formation of acyl-phosphate (acyl-PO(4)) from acyl-[acyl-carrier-protein] (acyl-ACP). This enzyme utilizes acyl-ACP as fatty acyl donor, but not acyl-CoA. This chain is Phosphate acyltransferase, found in Acidobacterium capsulatum (strain ATCC 51196 / DSM 11244 / BCRC 80197 / JCM 7670 / NBRC 15755 / NCIMB 13165 / 161).